We begin with the raw amino-acid sequence, 119 residues long: Protein TusC (119 aa).

The protein belongs to the DsrF/TusC family. As to quaternary structure, heterohexamer, formed by a dimer of trimers. The hexameric TusBCD complex contains 2 copies each of TusB, TusC and TusD. The TusBCD complex interacts with TusE.

Its subcellular location is the cytoplasm. Part of a sulfur-relay system required for 2-thiolation of 5-methylaminomethyl-2-thiouridine (mnm(5)s(2)U) at tRNA wobble positions. The sequence is that of Protein TusC from Serratia proteamaculans (strain 568).